Reading from the N-terminus, the 492-residue chain is GDP-Man:Man(3)GlcNAc(2)-PP-Dol alpha-1,2-mannosyltransferase (492 aa).

At 1-19 (MAADTGSWCVYAVLRFFYS) the chain is on the lumenal side. Residues 20 to 40 (LFFPGLMICGVLCVYLVIGLW) form a helical membrane-spanning segment. Residues 41–233 (VIRWHLQRKK…SRNALLSKAK (193 aa)) are Cytoplasmic-facing. An intramembrane region (helical) is located at residues 234 to 254 (LIYYYLFAFVYGLVGSCSDIV). Residues 255–399 (MVNSSWTLNH…IGLHTMWNEH (145 aa)) are Cytoplasmic-facing. Positions 400–420 (FGIGVVECMAAGTVILAHNSG) form an intramembrane region, helical. At 421 to 492 (GPKLDIVIPH…FLCSMEKLLT (72 aa)) the chain is on the cytoplasmic side.

It belongs to the glycosyltransferase group 1 family. Glycosyltransferase 4 subfamily.

It is found in the endoplasmic reticulum membrane. The catalysed reaction is an alpha-D-Man-(1-&gt;3)-[alpha-D-Man-(1-&gt;6)]-beta-D-Man-(1-&gt;4)-beta-D-GlcNAc-(1-&gt;4)-alpha-D-GlcNAc-diphospho-di-trans,poly-cis-dolichol + 2 GDP-alpha-D-mannose = an alpha-D-Man-(1-&gt;2)-alpha-D-Man-(1-&gt;2)-alpha-D-Man-(1-&gt;3)-[alpha-D-Man-(1-&gt;6)]-beta-D-Man-(1-&gt;4)-beta-D-GlcNAc-(1-&gt;4)-alpha-D-GlcNAc-diphospho-di-trans,poly-cis-dolichol + 2 GDP + 2 H(+). It participates in protein modification; protein glycosylation. In terms of biological role, GDP-Man:Man(3)GlcNAc(2)-PP-Dol alpha-1,2-mannosyltransferase that operates in the biosynthetic pathway of dolichol-linked oligosaccharides, the glycan precursors employed in protein asparagine (N)-glycosylation. The assembly of dolichol-linked oligosaccharides begins on the cytosolic side of the endoplasmic reticulum membrane and finishes in its lumen. The sequential addition of sugars to dolichol pyrophosphate produces dolichol-linked oligosaccharides containing fourteen sugars, including two GlcNAcs, nine mannoses and three glucoses. Once assembled, the oligosaccharide is transferred from the lipid to nascent proteins by oligosaccharyltransferases. Catalyzes, on the cytoplasmic face of the endoplasmic reticulum, the addition of the fourth and fifth mannose residues to the dolichol-linked oligosaccharide chain, to produce Man(5)GlcNAc(2)-PP-dolichol core oligosaccharide. Man(5)GlcNAc(2)-PP-dolichol is a substrate for ALG3, the following enzyme in the biosynthetic pathway. The sequence is that of GDP-Man:Man(3)GlcNAc(2)-PP-Dol alpha-1,2-mannosyltransferase from Mus musculus (Mouse).